Reading from the N-terminus, the 274-residue chain is 2,3,4,5-tetrahydropyridine-2,6-dicarboxylate N-succinyltransferase (274 aa).

Arg104 and Asp141 together coordinate substrate.

The protein belongs to the transferase hexapeptide repeat family. Homotrimer.

The protein resides in the cytoplasm. The catalysed reaction is (S)-2,3,4,5-tetrahydrodipicolinate + succinyl-CoA + H2O = (S)-2-succinylamino-6-oxoheptanedioate + CoA. It functions in the pathway amino-acid biosynthesis; L-lysine biosynthesis via DAP pathway; LL-2,6-diaminopimelate from (S)-tetrahydrodipicolinate (succinylase route): step 1/3. The polypeptide is 2,3,4,5-tetrahydropyridine-2,6-dicarboxylate N-succinyltransferase (Shewanella putrefaciens (strain CN-32 / ATCC BAA-453)).